The chain runs to 415 residues: Esterase FrsA (415 aa).

It belongs to the FrsA family. As to quaternary structure, monomer in solution. Homodimer. Forms a 1:1 complex with the unphosphorylated form of the EIIA component of the glucose-specific PTS system (IIAGlc).

The enzyme catalyses a carboxylic ester + H2O = an alcohol + a carboxylate + H(+). Catalyzes the hydrolysis of esters. In vitro, prefers short chain alkanoate ester as substrate. Displays highest activity towards p-nitrophenyl acetate (pNPA). Has weaker activity towards p-nitrophenyl butyrate (pNPB). The sequence is that of Esterase FrsA from Vibrio vulnificus (strain CMCP6).